We begin with the raw amino-acid sequence, 197 residues long: MTVVPIRIVGDPVLHTATTPVTVAADGSLPADLAQLIATMYDTMDAANGVGLAANQIGCSLRLFVYDCAADRAMTARRRGVVINPVLETSEIPETMPDPDTDDEGCLSVPGESFPTGRAKWARVTGLDADGSPVSIEGTGLFARMLQHETGHLDGFLYLDRLIGRYARNAKRAVKSHGWGVPGLSWLPGEDPDPFGH.

Fe cation-binding residues include Cys106 and His148. Glu149 is a catalytic residue. His152 serves as a coordination point for Fe cation.

It belongs to the polypeptide deformylase family. The cofactor is Fe(2+).

It carries out the reaction N-terminal N-formyl-L-methionyl-[peptide] + H2O = N-terminal L-methionyl-[peptide] + formate. Removes the formyl group from the N-terminal Met of newly synthesized proteins. Requires at least a dipeptide for an efficient rate of reaction. N-terminal L-methionine is a prerequisite for activity but the enzyme has broad specificity at other positions. This chain is Peptide deformylase, found in Mycobacterium bovis (strain ATCC BAA-935 / AF2122/97).